A 410-amino-acid chain; its full sequence is Chloride intracellular channel protein 5 (410 aa).

The short motif at 191 to 194 (CPFS) is the G-site element. A helical membrane pass occupies residues 193–213 (FSQRLFMILWLKGVVFNVTTV). In terms of domain architecture, GST C-terminal spans 260 to 400 (YPKLAAKHRE…AADSEIELAY (141 aa)).

It belongs to the chloride channel CLIC family. In terms of assembly, component of a multimeric complex consisting of several cytoskeletal proteins, including actin, ezrin, alpha-actinin, gelsolin, and IQGAP1. Interacts with AKAP9. Interacts with TPRN. TPRN, CLIC5 and PTPQR form concentric rings at the base of stereocilia and may form a complex. Interacts with EZR, MYO6 and RDX; the proteins may work together as a complex to stabilize linkages between the plasma membrane and subjacent actin cytoskeleton at the stereocilium base. Widely expressed in both fetal and adult human tissues. Isoform 1 is expressed in renal glomeruli endothelial cells and podocytes (at protein level).

Its subcellular location is the cytoplasm. The protein localises to the cytoskeleton. It is found in the cell cortex. It localises to the membrane. The protein resides in the apical cell membrane. Its subcellular location is the mitochondrion. The protein localises to the cell projection. It is found in the stereocilium. It localises to the golgi apparatus. The protein resides in the microtubule organizing center. Its subcellular location is the centrosome. The catalysed reaction is chloride(in) = chloride(out). It catalyses the reaction Na(+)(in) = Na(+)(out). The enzyme catalyses K(+)(in) = K(+)(out). Inhibited by F-actin. In the soluble state, catalyzes glutaredoxin-like thiol disulfide exchange reactions with reduced glutathione as electron donor. Can insert into membranes and form non-selective ion channels almost equally permeable to Na(+), K(+) and Cl(-). Required for normal hearing. It is necessary for the formation of stereocilia in the inner ear and normal development of the organ of Corti. May play a role in the regulation of transepithelial ion absorption and secretion. Is required for the development and/or maintenance of the proper glomerular endothelial cell and podocyte architecture. Plays a role in formation of the lens suture in the eye, which is important for normal optical properties of the lens. This Homo sapiens (Human) protein is Chloride intracellular channel protein 5.